Reading from the N-terminus, the 991-residue chain is Adhesion G-protein coupled receptor F3 (991 aa).

Positions 1–20 (MSSLALSQLLLAVTLPLLEL) are cleaved as a signal peptide. Over 21–694 (EPTFVPTAQS…ENPTLDLLSQ (674 aa)) the chain is Extracellular. Asparagine 75, asparagine 102, asparagine 118, asparagine 321, asparagine 362, asparagine 484, asparagine 571, asparagine 589, asparagine 630, and asparagine 660 each carry an N-linked (GlcNAc...) asparagine glycan. The 166-residue stretch at 519–684 (HPFSFSSANV…SILMSQHTVP (166 aa)) folds into the GAIN-B domain. 2 disulfide bridges follow: cysteine 635–cysteine 666 and cysteine 654–cysteine 668. The interval 635–684 (CVFWDHRVFQGQGGWSDEGCEVHAANASITQCICQHLTAFSILMSQHTVP) is GPS. Residues 695 to 715 (VGTGASVLALLVCLAIYGLVW) form a helical membrane-spanning segment. Residues 716–730 (RVVVRNKVAFFRHTT) are Cytoplasmic-facing. Residues 731–751 (LFNMVICLLVADTCFLGSPFL) form a helical membrane-spanning segment. Residues 752–757 (PSGYHS) are Extracellular-facing. The chain crosses the membrane as a helical span at residues 758–778 (LICLVTAFLCHFFYLATFFWM). Topologically, residues 779-799 (LAQALVLAHQLLFVFHQLSKH) are cytoplasmic. The chain crosses the membrane as a helical span at residues 800 to 820 (VVLSLMVMLGYLCPLGFAGVT). Residues 821 to 850 (LGLYLPQRKYLWEGKCFLNGGGVMLYSFSE) lie on the Extracellular side of the membrane. The chain crosses the membrane as a helical span at residues 851–871 (PVLAIVGVNGLVLVIAVLKLL). Residues 872–892 (RPSLSEGPTVEKRQALVGVLK) lie on the Cytoplasmic side of the membrane. A helical transmembrane segment spans residues 893–913 (ALLILTPIFGLTWGLGVATLF). The Extracellular portion of the chain corresponds to 914-916 (DGS). A helical transmembrane segment spans residues 917–937 (IVSHYAFSILNSLQGVFILVF). Over 938-991 (GCLTDKKVLEALRKRLRGSRSSNSAISMVTNETYTSEHSKERSEPASYEERMTD) the chain is Cytoplasmic. The tract at residues 964-991 (SMVTNETYTSEHSKERSEPASYEERMTD) is disordered. The segment covering 972 to 991 (TSEHSKERSEPASYEERMTD) has biased composition (basic and acidic residues).

This sequence belongs to the G-protein coupled receptor 2 family. Adhesion G-protein coupled receptor (ADGR) subfamily. In terms of assembly, heterodimer of 2 chains generated by proteolytic processing; the large extracellular N-terminal fragment and the membrane-bound C-terminal fragment predominantly remain associated and non-covalently linked. Autoproteolytically processed at the GPS region of the GAIN-B domain; this cleavage modulates receptor activity. As to expression, expression is restricted to testis and circumvallate papillae.

It localises to the membrane. Orphan receptor. This is Adhesion G-protein coupled receptor F3 (ADGRF3) from Mus musculus (Mouse).